The primary structure comprises 492 residues: GTPase Obg (492 aa).

The 158-residue stretch at 2-159 (PRFVDRVVIH…RELTLELKTV (158 aa)) folds into the Obg domain. In terms of domain architecture, OBG-type G spans 160 to 340 (ADVGLIGFPS…LIFGLWQMIS (181 aa)). GTP contacts are provided by residues 166-173 (GFPSAGKS), 191-195 (FTTLV), 212-215 (DVPG), 292-295 (NKID), and 321-323 (STV). Serine 173 and threonine 193 together coordinate Mg(2+). Residues 358–438 (PVPVDDSGFR…IGDMTFDWEP (81 aa)) enclose the OCT domain. A disordered region spans residues 441–492 (PAGQQVVLSGRGTDARLERTERVGAAERKAARRQRRTGDDAERGTTERGENT). Basic and acidic residues-rich tracts occupy residues 453 to 469 (TDAR…AERK) and 476 to 492 (RTGD…GENT).

The protein belongs to the TRAFAC class OBG-HflX-like GTPase superfamily. OBG GTPase family. As to quaternary structure, monomer. Requires Mg(2+) as cofactor.

The protein localises to the cytoplasm. In terms of biological role, an essential GTPase which binds GTP, GDP and possibly (p)ppGpp with moderate affinity, with high nucleotide exchange rates and a fairly low GTP hydrolysis rate. Plays a role in control of the cell cycle, stress response, ribosome biogenesis and in those bacteria that undergo differentiation, in morphogenesis control. This Mycolicibacterium paratuberculosis (strain ATCC BAA-968 / K-10) (Mycobacterium paratuberculosis) protein is GTPase Obg.